A 100-amino-acid chain; its full sequence is Urease subunit gamma (100 aa).

The protein belongs to the urease gamma subunit family. As to quaternary structure, heterotrimer of UreA (gamma), UreB (beta) and UreC (alpha) subunits. Three heterotrimers associate to form the active enzyme.

It is found in the cytoplasm. It catalyses the reaction urea + 2 H2O + H(+) = hydrogencarbonate + 2 NH4(+). Its pathway is nitrogen metabolism; urea degradation; CO(2) and NH(3) from urea (urease route): step 1/1. This is Urease subunit gamma from Parasynechococcus marenigrum (strain WH8102).